The chain runs to 103 residues: Small ribosomal subunit protein uS10 (103 aa).

The protein belongs to the universal ribosomal protein uS10 family. In terms of assembly, part of the 30S ribosomal subunit.

Its function is as follows. Involved in the binding of tRNA to the ribosomes. The polypeptide is Small ribosomal subunit protein uS10 (Chromobacterium violaceum (strain ATCC 12472 / DSM 30191 / JCM 1249 / CCUG 213 / NBRC 12614 / NCIMB 9131 / NCTC 9757 / MK)).